Here is a 262-residue protein sequence, read N- to C-terminus: Dihydroorotate dehydrogenase B (NAD(+)), electron transfer subunit (262 aa).

Residues 3-104 form the FAD-binding FR-type domain; it reads KLQEMMTIVS…MGPLGNGFPV (102 aa). FAD-binding positions include 53 to 56, 70 to 72, and 79 to 80; these read RPIS, LYR, and GT. [2Fe-2S] cluster is bound by residues cysteine 226, cysteine 231, cysteine 234, and cysteine 249.

Belongs to the PyrK family. As to quaternary structure, heterotetramer of 2 PyrK and 2 PyrD type B subunits. It depends on [2Fe-2S] cluster as a cofactor. Requires FAD as cofactor.

The protein operates within pyrimidine metabolism; UMP biosynthesis via de novo pathway; orotate from (S)-dihydroorotate (NAD(+) route): step 1/1. Responsible for channeling the electrons from the oxidation of dihydroorotate from the FMN redox center in the PyrD type B subunit to the ultimate electron acceptor NAD(+). In Lactococcus lactis subsp. lactis (strain IL1403) (Streptococcus lactis), this protein is Dihydroorotate dehydrogenase B (NAD(+)), electron transfer subunit.